Consider the following 229-residue polypeptide: Dephospho-CoA kinase domain-containing protein (229 aa).

The 205-residue stretch at 3-207 folds into the DPCK domain; that stretch reads LVGLTGGIAS…DCMQFLIIRA (205 aa). 8 to 15 provides a ligand contact to ATP; sequence GGIASGKS.

The protein belongs to the CoaE family.

The polypeptide is Dephospho-CoA kinase domain-containing protein (dcakd) (Danio rerio (Zebrafish)).